Reading from the N-terminus, the 141-residue chain is Large ribosomal subunit protein uL11 (141 aa).

This sequence belongs to the universal ribosomal protein uL11 family. Part of the ribosomal stalk of the 50S ribosomal subunit. Interacts with L10 and the large rRNA to form the base of the stalk. L10 forms an elongated spine to which L12 dimers bind in a sequential fashion forming a multimeric L10(L12)X complex. One or more lysine residues are methylated.

Functionally, forms part of the ribosomal stalk which helps the ribosome interact with GTP-bound translation factors. This Chloroherpeton thalassium (strain ATCC 35110 / GB-78) protein is Large ribosomal subunit protein uL11.